Here is a 119-residue protein sequence, read N- to C-terminus: Methylglyoxal synthase (119 aa).

Residues 1–119 form the MGS-like domain; it reads MKIALIAHDK…ESAKLIMADI (119 aa). Residues histidine 8, lysine 12, 34–37, and 54–55 each bind substrate; these read TGTT and SG. The active-site Proton donor/acceptor is the aspartate 60. Histidine 87 contributes to the substrate binding site.

This sequence belongs to the methylglyoxal synthase family.

It carries out the reaction dihydroxyacetone phosphate = methylglyoxal + phosphate. Its function is as follows. Catalyzes the formation of methylglyoxal from dihydroxyacetone phosphate. The chain is Methylglyoxal synthase from Clostridium perfringens (strain ATCC 13124 / DSM 756 / JCM 1290 / NCIMB 6125 / NCTC 8237 / Type A).